The chain runs to 87 residues: Small ribosomal subunit protein bS18 (87 aa).

Residues 1–20 (MAGKSSGDRRKPIRKGKDGK) show a composition bias toward basic and acidic residues. The interval 1-24 (MAGKSSGDRRKPIRKGKDGKNAAP) is disordered.

The protein belongs to the bacterial ribosomal protein bS18 family. Part of the 30S ribosomal subunit. Forms a tight heterodimer with protein bS6.

Its function is as follows. Binds as a heterodimer with protein bS6 to the central domain of the 16S rRNA, where it helps stabilize the platform of the 30S subunit. The protein is Small ribosomal subunit protein bS18 of Leifsonia xyli subsp. xyli (strain CTCB07).